We begin with the raw amino-acid sequence, 313 residues long: Olfactory receptor 1M1 (313 aa).

Residues 1–25 (MEPRNQTSASQFILLGLSEKPEQET) lie on the Extracellular side of the membrane. N5 carries an N-linked (GlcNAc...) asparagine glycan. Residues 26–49 (LLFSLFFCMYLVMVVGNLLIILAI) form a helical membrane-spanning segment. Residues 50–57 (SIDSHLHT) are Cytoplasmic-facing. Residues 58–79 (PMYFFLANLSLVDFCLATNTIP) form a helical membrane-spanning segment. The Extracellular portion of the chain corresponds to 80–100 (KMLVSLQTGSKAISYPCCLIQ). A disulfide bond links C97 and C189. The chain crosses the membrane as a helical span at residues 101–120 (MYFFHFFGIVDSVIIAMMAY). At 121-139 (DRFVAICHPLHYAKIMSLR) the chain is on the cytoplasmic side. The chain crosses the membrane as a helical span at residues 140-158 (LCRLLVGALWAFSCFISLT). The Extracellular segment spans residues 159–196 (HILLMARLVFCGSHEVPHYFCDLTPILRLSCTDTSVNR). A helical membrane pass occupies residues 197-219 (IFILIVAGMVIATPFVCILASYA). At 220–236 (RILVAIMKVPSAGGRKK) the chain is on the cytoplasmic side. Residues 237 to 259 (AFSTCSSHLSVVALFYGTTIGVY) traverse the membrane as a helical segment. Residues 260–272 (LCPSSVLTTVKEK) lie on the Extracellular side of the membrane. The helical transmembrane segment at 273-292 (ASAVMYTAVTPMLNPFIYSL) threads the bilayer. Residues 293 to 313 (RNRDLKGALRKLVNRKITSSS) lie on the Cytoplasmic side of the membrane.

It belongs to the G-protein coupled receptor 1 family.

It is found in the cell membrane. Its function is as follows. Odorant receptor. The chain is Olfactory receptor 1M1 from Homo sapiens (Human).